We begin with the raw amino-acid sequence, 860 residues long: Leucine--tRNA ligase (860 aa).

Positions 42-52 (PYPSGRLHMGH) match the 'HIGH' region motif. The 'KMSKS' region signature appears at 619-623 (KMSKS). Lys622 contacts ATP.

Belongs to the class-I aminoacyl-tRNA synthetase family.

It is found in the cytoplasm. It catalyses the reaction tRNA(Leu) + L-leucine + ATP = L-leucyl-tRNA(Leu) + AMP + diphosphate. This chain is Leucine--tRNA ligase, found in Salmonella choleraesuis (strain SC-B67).